Here is a 494-residue protein sequence, read N- to C-terminus: MFQVQKELASHEAVVVALFEEEKTSSFVQELDKAFEGQLQVLLEEKELSTKKKAISKVHSLGKTDVKRYYFVGLGKKESYTTETLRSALGKTFKTLQAAKVQDAAILLDSFVTEKLDAIDVAHIAAEVQGLGTYELQTYKSDKKDRVKLEKFTAITAEDAQEIEAALTVGYVHGRATNSARTLVNMPPNVLTATKLAEYAVELAEKYDMDYKVLEKEEMEELGMGALLAVNQGSVEPPKMIALIYKGKEEWTDVIGFVGKGITYDTGGYSLKPREGMVGMKGDMGGAAAVLGAMEIIGELRPEQNVIAVIPSTDNVVSGTAFKPDDVITSMSGKTIEVLNTDAEGRLALADGITYAKKLGANYLIDVATLTGGVIVALGNHTTGAMTNNEELFEQVLEASMETDESIWQLPIFDRDKERVRNSKFADLNNSPGREGHAVMAGTFIGEFAEDTPWVHLDIAGTSESSGAHDLGPAGATGAMVRTLATLVERFGEE.

Residues Lys260 and Asp265 each coordinate Mn(2+). Lys272 is an active-site residue. 3 residues coordinate Mn(2+): Asp283, Asp342, and Glu344. Arg346 is an active-site residue.

This sequence belongs to the peptidase M17 family. Mn(2+) serves as cofactor.

The protein localises to the cytoplasm. It catalyses the reaction Release of an N-terminal amino acid, Xaa-|-Yaa-, in which Xaa is preferably Leu, but may be other amino acids including Pro although not Arg or Lys, and Yaa may be Pro. Amino acid amides and methyl esters are also readily hydrolyzed, but rates on arylamides are exceedingly low.. The enzyme catalyses Release of an N-terminal amino acid, preferentially leucine, but not glutamic or aspartic acids.. In terms of biological role, presumably involved in the processing and regular turnover of intracellular proteins. Catalyzes the removal of unsubstituted N-terminal amino acids from various peptides. In Bacillus thuringiensis (strain Al Hakam), this protein is Probable cytosol aminopeptidase.